Consider the following 141-residue polypeptide: uncharacterized protein (141 aa).

This is an uncharacterized protein from Saccharomyces cerevisiae (strain ATCC 204508 / S288c) (Baker's yeast).